Reading from the N-terminus, the 209-residue chain is Large ribosomal subunit protein uL3 (209 aa).

Residues 141-163 form a disordered region; the sequence is RAVGSMGASSDPSRTFKNKRMPG.

This sequence belongs to the universal ribosomal protein uL3 family. As to quaternary structure, part of the 50S ribosomal subunit. Forms a cluster with proteins L14 and L19.

One of the primary rRNA binding proteins, it binds directly near the 3'-end of the 23S rRNA, where it nucleates assembly of the 50S subunit. This chain is Large ribosomal subunit protein uL3, found in Clostridium botulinum (strain Langeland / NCTC 10281 / Type F).